Consider the following 1115-residue polypeptide: PAN2-PAN3 deadenylation complex catalytic subunit PAN2 (1115 aa).

5 WD repeats span residues 27–66 (NRDKEITAISFDEKANLIWSGDSYGCISSYDPTFQLYTRY), 112–153 (AAFS…GCLD), 155–194 (LLNYSSKVKLMCSNNKVLSIGRQTGTVDLLDPTSNRTIKS), 197–236 (AHSASISAMDLRDNTLVTVGKSKRFYNLYADPFVNVYDLR), and 295–334 (HPCQSIKKLCLSPNGDVLGILEADNHLDTWRRSSNNMGMF). Residues 337–473 (TPEMLAYPDY…IQTYTSINKY (137 aa)) are linker. The USP domain maps to 474–855 (EVPPAYSRLP…TPEIIIYCDA (382 aa)). Zn(2+) contacts are provided by cysteine 660, histidine 662, cysteine 713, and cysteine 716. In terms of domain architecture, Exonuclease spans 907 to 1079 (VAIDAEFVSL…EDAHTALILY (173 aa)). The a divalent metal cation site is built by aspartate 910, glutamate 912, aspartate 1020, and aspartate 1071.

This sequence belongs to the peptidase C19 family. PAN2 subfamily. Forms a heterotrimer with an asymmetric homodimer of the regulatory subunit PAN3 to form the poly(A)-nuclease (PAN) deadenylation complex. Requires a divalent metal cation as cofactor.

The protein localises to the cytoplasm. It catalyses the reaction Exonucleolytic cleavage of poly(A) to 5'-AMP.. Its activity is regulated as follows. Positively regulated by the regulatory subunit PAN3. Negatively regulated by PAB1-binding protein PBP1. Inhibited under stress conditions. Inhibition of deadenylation under stress increases mRNA stability, which may be a mechanism to retain the majority of the cytoplasmic pool of mRNAs for later reuse and recovery from stress. Functionally, catalytic subunit of the poly(A)-nuclease (PAN) deadenylation complex, one of two cytoplasmic mRNA deadenylases involved in mRNA turnover. PAN specifically shortens poly(A) tails of RNA and the activity is stimulated by poly(A)-binding protein PAB1. PAN deadenylation is followed by rapid degradation of the shortened mRNA tails by the CCR4-NOT complex. Deadenylated mRNAs are then degraded by two alternative mechanisms, namely exosome-mediated 3'-5' exonucleolytic degradation, or deadenylation-dependent mRNA decaping by DCP1-DCP2 and subsequent 5'-3' exonucleolytic degradation by XRN1. May also be involved in post-transcriptional maturation of mRNA poly(A) tails, trimming the tails from their synthesized length to the slightly shorter, apparently messenger-specific length found on newly exported mRNAs. PAN cooperates with protein kinase DUN1 in the regulation of RAD5 mRNA levels and cell survival in response to replicational stress. The protein is PAN2-PAN3 deadenylation complex catalytic subunit PAN2 of Saccharomyces cerevisiae (strain ATCC 204508 / S288c) (Baker's yeast).